The following is a 371-amino-acid chain: Anhydro-N-acetylmuramic acid kinase (371 aa).

ATP is bound at residue 12 to 20 (GTVLDGNID).

It belongs to the anhydro-N-acetylmuramic acid kinase family.

The catalysed reaction is 1,6-anhydro-N-acetyl-beta-muramate + ATP + H2O = N-acetyl-D-muramate 6-phosphate + ADP + H(+). It participates in amino-sugar metabolism; 1,6-anhydro-N-acetylmuramate degradation. Its pathway is cell wall biogenesis; peptidoglycan recycling. In terms of biological role, catalyzes the specific phosphorylation of 1,6-anhydro-N-acetylmuramic acid (anhMurNAc) with the simultaneous cleavage of the 1,6-anhydro ring, generating MurNAc-6-P. Is required for the utilization of anhMurNAc either imported from the medium or derived from its own cell wall murein, and thus plays a role in cell wall recycling. The protein is Anhydro-N-acetylmuramic acid kinase of Rhizobium rhizogenes (strain K84 / ATCC BAA-868) (Agrobacterium radiobacter).